The primary structure comprises 372 residues: MTFSVQETLFSLLRLNGISGHESSIANVMQHAFEQQAKDVWRDRLGNVVARYGSDKSDALRLMIFAHMDEVGFMVRKIEPSGFLRFERVGGPAQITMPGSIVTLAGCSGDIMGCIGIKAYHFAKGDERTQPPALDKLWIDIGAKDKADAERMGIQVGTPVTLYNPPHCLGNDLVCSKALDDRLGCTALLGVAEALASTPLDIAVFLVASVQEEFNIRGIVPVLRRVRPDLAIGIDITPSCDTPDLQDYSDVRVNHGVGITCLNYHGRGTLAGLITPPRLLRMLETTAHENNIPVQREVAPGVITETGYIQVELDGIPCASLSIPCRYTHSPAEVASLRDLADCIRLLTALANMSPEQFPIDPETGATQEARP.

The a divalent metal cation site is built by His67 and Asp180. Residue Glu212 is the Proton acceptor of the active site. A divalent metal cation is bound by residues Glu213, Asp235, and His329.

The protein belongs to the peptidase M42 family. A divalent metal cation serves as cofactor.

The sequence is that of Putative aminopeptidase SgcX (sgcX) from Salmonella typhi.